The sequence spans 185 residues: Tumor necrosis factor receptor superfamily member 17 (185 aa).

The Extracellular segment spans residues 1 to 49 (MAQQCFHSEYFDSLLHACKPCHLRCSNPPATCQPYCDPSVTSSVKGTYT). Residues 4–36 (QCFHSEYFDSLLHACKPCHLRCSNPPATCQPYC) form a TNFR-Cys repeat. Cystine bridges form between Cys-5–Cys-18, Cys-21–Cys-32, and Cys-25–Cys-36. Residues 50 to 70 (VLWIFLGLTLVLSLALFTISF) traverse the membrane as a helical; Signal-anchor for type III membrane protein segment. Over 71–185 (LLRKMNPEAL…MGMEKPTHTR (115 aa)) the chain is Cytoplasmic.

Associates with TRAF1, TRAF2, TRAF3, TRAF5 and TRAF6. As to expression, detected in spleen, thymus, bone marrow and heart, and at lower levels in kidney and lung.

The protein localises to the membrane. Functionally, receptor for TNFSF13B/BLyS/BAFF and TNFSF13/APRIL. Promotes B-cell survival and plays a role in the regulation of humoral immunity. Activates NF-kappa-B and JNK. In Mus musculus (Mouse), this protein is Tumor necrosis factor receptor superfamily member 17 (Tnfrsf17).